We begin with the raw amino-acid sequence, 65 residues long: Large ribosomal subunit protein uL29 (65 aa).

The protein belongs to the universal ribosomal protein uL29 family.

The sequence is that of Large ribosomal subunit protein uL29 from Delftia acidovorans (strain DSM 14801 / SPH-1).